The following is a 340-amino-acid chain: Serpentine receptor class alpha-23 (340 aa).

Helical transmembrane passes span Phe34 to Trp54, Tyr114 to Ile136, Phe150 to Ala170, Val199 to Val219, Ile250 to Leu270, and Val284 to Phe304.

The protein belongs to the nematode receptor-like protein sra family.

Its subcellular location is the membrane. The sequence is that of Serpentine receptor class alpha-23 (sra-23) from Caenorhabditis elegans.